The sequence spans 202 residues: uncharacterized protein (202 aa).

Positions 116 to 196 constitute a Smr domain; the sequence is LDLHGMTCSE…GKGTTWVLLK (81 aa).

This is an uncharacterized protein from Treponema pallidum (strain Nichols).